Consider the following 209-residue polypeptide: MCDMYSDFILGSSSKCRSQLLEVLGFFPKRSIGPEIDESPKKGELPLTYAKRMAYEKALKLKRVCHEENVITADTVASCGRRILPKACCDEDVRYCLEFLSGRRHRLYTSLCLVTKSGEVRQRTVMTVLKFKRLSNEEIEFYLATKEGIGKAGGYSIQGMAQGFVLFIRGSYFNVVGLPAYEVISLLRSVGVFQQSREALYSQGVKDAK.

Asp74 functions as the Proton acceptor in the catalytic mechanism.

This sequence belongs to the Maf family. It depends on a divalent metal cation as a cofactor.

The protein resides in the cytoplasm. It carries out the reaction a ribonucleoside 5'-triphosphate + H2O = a ribonucleoside 5'-phosphate + diphosphate + H(+). The catalysed reaction is a 2'-deoxyribonucleoside 5'-triphosphate + H2O = a 2'-deoxyribonucleoside 5'-phosphate + diphosphate + H(+). Its function is as follows. Nucleoside triphosphate pyrophosphatase. May have a dual role in cell division arrest and in preventing the incorporation of modified nucleotides into cellular nucleic acids. The sequence is that of Nucleoside triphosphate pyrophosphatase from Neorickettsia sennetsu (strain ATCC VR-367 / Miyayama) (Ehrlichia sennetsu).